We begin with the raw amino-acid sequence, 771 residues long: Ribonucleoside-diphosphate reductase large subunit (771 aa).

Residues 1 to 92 (MFVIKRNGYK…VSNLHKETKK (92 aa)) form the ATP-cone domain. ATP is bound by residues 5 to 6 (KR), 11 to 17 (ENVMFDK), Thr-53, Asp-57, and Lys-88. Residues Ser-202 and Ser-217 each contribute to the GDP site. DTTP contacts are provided by residues 226-228 (DSI), Lys-243, and Arg-256. Asn-427 is a GDP binding site. The active-site Proton acceptor is Asn-427. Cys-429 functions as the Cysteine radical intermediate in the catalytic mechanism. GDP is bound by residues Glu-431 and 603 to 606 (TAST). Catalysis depends on Glu-431, which acts as the Proton acceptor.

Belongs to the ribonucleoside diphosphate reductase large chain family. In terms of assembly, interacts with RNR2/OPG047 subunit. It depends on Mg(2+) as a cofactor.

The enzyme catalyses a 2'-deoxyribonucleoside 5'-diphosphate + [thioredoxin]-disulfide + H2O = a ribonucleoside 5'-diphosphate + [thioredoxin]-dithiol. Ribonucleoside-diphosphate reductase holoenzyme provides the precursors necessary for viral DNA synthesis. Allows virus growth in non-dividing cells. Catalyzes the biosynthesis of deoxyribonucleotides from the corresponding ribonucleotides. This chain is Ribonucleoside-diphosphate reductase large subunit (OPG080), found in Homo sapiens (Human).